The following is an 89-amino-acid chain: Probable Fe(2+)-trafficking protein (89 aa).

It belongs to the Fe(2+)-trafficking protein family.

In terms of biological role, could be a mediator in iron transactions between iron acquisition and iron-requiring processes, such as synthesis and/or repair of Fe-S clusters in biosynthetic enzymes. The sequence is that of Probable Fe(2+)-trafficking protein from Legionella pneumophila (strain Paris).